The following is a 389-amino-acid chain: S-adenosylmethionine synthase (389 aa).

An ATP-binding site is contributed by H19. D21 lines the Mg(2+) pocket. Residue E47 participates in K(+) binding. 2 residues coordinate L-methionine: E60 and Q103. Residues Q103–R113 are flexible loop. ATP-binding positions include D168–K170, R234–F235, D243, R249–K250, A266, and K270. Residue D243 coordinates L-methionine. Position 274 (K274) interacts with L-methionine.

This sequence belongs to the AdoMet synthase family. Homotetramer; dimer of dimers. Requires Mg(2+) as cofactor. K(+) is required as a cofactor.

The protein resides in the cytoplasm. It catalyses the reaction L-methionine + ATP + H2O = S-adenosyl-L-methionine + phosphate + diphosphate. Its pathway is amino-acid biosynthesis; S-adenosyl-L-methionine biosynthesis; S-adenosyl-L-methionine from L-methionine: step 1/1. Catalyzes the formation of S-adenosylmethionine (AdoMet) from methionine and ATP. The overall synthetic reaction is composed of two sequential steps, AdoMet formation and the subsequent tripolyphosphate hydrolysis which occurs prior to release of AdoMet from the enzyme. This is S-adenosylmethionine synthase from Maridesulfovibrio salexigens (strain ATCC 14822 / DSM 2638 / NCIMB 8403 / VKM B-1763) (Desulfovibrio salexigens).